Here is an 877-residue protein sequence, read N- to C-terminus: Alanine--tRNA ligase (877 aa).

Positions 556, 560, 657, and 661 each coordinate Zn(2+).

It belongs to the class-II aminoacyl-tRNA synthetase family. Zn(2+) serves as cofactor.

The protein localises to the cytoplasm. It carries out the reaction tRNA(Ala) + L-alanine + ATP = L-alanyl-tRNA(Ala) + AMP + diphosphate. In terms of biological role, catalyzes the attachment of alanine to tRNA(Ala) in a two-step reaction: alanine is first activated by ATP to form Ala-AMP and then transferred to the acceptor end of tRNA(Ala). Also edits incorrectly charged Ser-tRNA(Ala) and Gly-tRNA(Ala) via its editing domain. The chain is Alanine--tRNA ligase from Wolbachia pipientis wMel.